The sequence spans 310 residues: p-hydroxybenzoic acid efflux pump subunit AaeA (310 aa).

Residues 12–32 (AITVVLVILAFIAIFNAWVYY) form a helical membrane-spanning segment.

This sequence belongs to the membrane fusion protein (MFP) (TC 8.A.1) family.

It localises to the cell inner membrane. Functionally, forms an efflux pump with AaeB. This chain is p-hydroxybenzoic acid efflux pump subunit AaeA, found in Shigella flexneri.